Here is a 210-residue protein sequence, read N- to C-terminus: MSGKGTSSRAYDMIMKLLLVGDSGVGKSCLLLRFVEDKFNPSFITTIGIDFKIRTIESKGKRIKLQVWDTAGQERFRTITTAYYRGAMGIVLIYDVTDSRSFENVENWFQTVTQHANEDAQIFLVGNKCDDEVNRQVSKEQGQELAAKLNVPFLEASAKSNENVDSIFYELASIIQEKHVEENIGGVGGASGAGGIDVSQNNSGAKNNCC.

21 to 28 (GDSGVGKS) lines the GTP pocket. An Effector region motif is present at residues 43-51 (FITTIGIDF). Residues 69–73 (DTAGQ) and 127–130 (NKCD) contribute to the GTP site. 2 S-geranylgeranyl cysteine lipidation sites follow: Cys-209 and Cys-210.

This sequence belongs to the small GTPase superfamily. Rab family.

The protein localises to the cytoplasmic vesicle. The protein resides in the secretory vesicle membrane. Its subcellular location is the cell membrane. Involved in exocytosis. Maybe by regulating the binding and fusion of secretory vesicles with the cell surface. The GTP-bound form of SEC4 may interact with an effector, thereby stimulating its activity and leading to exocytotic fusion. SEC4 may be an upstream activator of the 19.5S SEC8/SEC15 particle. SEC4 probably interacts directly with SEC8; it could serve as the attachment site for the SEC8/SEC15 particle. This Candida albicans (strain SC5314 / ATCC MYA-2876) (Yeast) protein is Ras-related protein SEC4 (SEC4).